A 92-amino-acid polypeptide reads, in one-letter code: Large ribosomal subunit protein bL31 (92 aa).

The disordered stretch occupies residues 66-92 (GMGSANPDVDAPAPKKAAKKSDAESDS). Positions 70–80 (ANPDVDAPAPK) are enriched in low complexity.

The protein belongs to the bacterial ribosomal protein bL31 family. Type A subfamily. As to quaternary structure, part of the 50S ribosomal subunit.

Functionally, binds the 23S rRNA. This chain is Large ribosomal subunit protein bL31, found in Synechococcus sp. (strain RCC307).